A 117-amino-acid polypeptide reads, in one-letter code: Carboxysome shell protein CcmK4 (117 aa).

The BMC domain occupies 5 to 91 (AVGSLETKGF…PHENVECVLP (87 aa)).

Belongs to the bacterial microcompartments protein family. CcmK subfamily. Crystallizes as a homohexamer. Interacts stably with CcmK3, forming heterohexamers that can make dodecamers. Heterohexamers have a 1:2 CcmK3:CcmK4 stoichiometry. Upon expression in E.coli forms large aggregates.

It is found in the carboxysome. Its function is as follows. A probably essential, minor shell protein of the carboxysome, a polyhedral inclusion where RuBisCO (ribulose bisphosphate carboxylase, rbcL-rbcS) is sequestered. Hexamers form sheets that form the facets of the polyhedral carboxysome. In PCC 7418 there are several CcmK paralogs with presumably functional differences. This subunit can probably make both homohexamers and heterohexamers with CcmK3. Both hexamers can also make dodecamers, formation depends on buffer conditions. In Halothece sp. (strain PCC 7418) (Synechococcus sp. (strain PCC 7418)), this protein is Carboxysome shell protein CcmK4.